Reading from the N-terminus, the 427-residue chain is Putative tyrosine recombinase XerC (427 aa).

The Core-binding (CB) domain occupies 1 to 81; sequence MTPQQLTEEY…HLRTIWGYAI (81 aa). The 190-residue stretch at 116-305 folds into the Tyr recombinase domain; sequence RARSWLSMQV…DYDHMRAVLH (190 aa). Residues arginine 156, lysine 183, histidine 256, arginine 259, and histidine 283 contribute to the active site. The active-site O-(3'-phospho-DNA)-tyrosine intermediate is the tyrosine 292. 2 disordered regions span residues 323 to 384 and 401 to 427; these read SGSP…PPDT and RAATASAVPAATSGSGGRGSAARDSLA. Residues 350–362 are compositionally biased toward basic and acidic residues; that stretch reads ARTEPSEPREHTQ. Positions 402–413 are enriched in low complexity; sequence AATASAVPAATS.

This sequence belongs to the 'phage' integrase family.

It is found in the cytoplasm. Site-specific tyrosine recombinase, which acts by catalyzing the cutting and rejoining of the recombining DNA molecules. This Pseudomonas aeruginosa protein is Putative tyrosine recombinase XerC.